We begin with the raw amino-acid sequence, 336 residues long: 3-isopropylmalate dehydrogenase (336 aa).

Substrate is bound by residues Arg-87, Arg-97, Arg-121, and Asp-211. Mg(2+) is bound by residues Asp-211, Asp-235, and Asp-239. Residue 271–283 participates in NAD(+) binding; that stretch reads GSAPDIAGQGIAD.

Belongs to the isocitrate and isopropylmalate dehydrogenases family. LeuB type 2 subfamily. Homodimer. Mg(2+) is required as a cofactor. It depends on Mn(2+) as a cofactor.

The protein localises to the cytoplasm. The catalysed reaction is (2R,3S)-3-isopropylmalate + NAD(+) = 4-methyl-2-oxopentanoate + CO2 + NADH. It functions in the pathway amino-acid biosynthesis; L-leucine biosynthesis; L-leucine from 3-methyl-2-oxobutanoate: step 3/4. In terms of biological role, catalyzes the oxidation of 3-carboxy-2-hydroxy-4-methylpentanoate (3-isopropylmalate) to 3-carboxy-4-methyl-2-oxopentanoate. The product decarboxylates to 4-methyl-2 oxopentanoate. In Mycolicibacterium vanbaalenii (strain DSM 7251 / JCM 13017 / BCRC 16820 / KCTC 9966 / NRRL B-24157 / PYR-1) (Mycobacterium vanbaalenii), this protein is 3-isopropylmalate dehydrogenase.